The primary structure comprises 633 residues: Threonine--tRNA ligase (633 aa).

In terms of domain architecture, TGS spans 1–61 (MINITLPDGS…DHDASLRIIT (61 aa)). A catalytic region spans residues 243-534 (DHRRIGKQQD…LIEHHAGQFP (292 aa)). Zn(2+)-binding residues include Cys334, His385, and His511.

This sequence belongs to the class-II aminoacyl-tRNA synthetase family. In terms of assembly, homodimer. Zn(2+) serves as cofactor.

The protein localises to the cytoplasm. The enzyme catalyses tRNA(Thr) + L-threonine + ATP = L-threonyl-tRNA(Thr) + AMP + diphosphate + H(+). In terms of biological role, catalyzes the attachment of threonine to tRNA(Thr) in a two-step reaction: L-threonine is first activated by ATP to form Thr-AMP and then transferred to the acceptor end of tRNA(Thr). Also edits incorrectly charged L-seryl-tRNA(Thr). The protein is Threonine--tRNA ligase of Stenotrophomonas maltophilia (strain R551-3).